The following is a 367-amino-acid chain: Cyclin-Y-like protein 1 (367 aa).

Residues Ser73, Ser111, and Ser118 each carry the phosphoserine modification. The Cyclin N-terminal domain occupies 186 to 291 (EYFKHDPEHK…FLELLQFNIN (106 aa)). A Phosphoserine modification is found at Ser352.

The protein belongs to the cyclin family. Cyclin Y subfamily. Interacts with CDK16; this interaction mutually increases the stability of CDK16 and CCNYL1 and increases the kinase activity of CDK16. In terms of tissue distribution, highly expressed in the testis. Largely restricted to germ cells in the testis.

It localises to the cell membrane. Functionally, key regulator of Wnt signaling implicated in various biological processes including male fertility, embryonic neurogenesis and cortex development. Activates the cyclin-dependent kinase CDK16, and promotes sperm maturation. In Mus musculus (Mouse), this protein is Cyclin-Y-like protein 1.